The following is a 69-amino-acid chain: Large ribosomal subunit protein bL31 (69 aa).

Cys16, Cys18, Cys36, and Cys39 together coordinate Zn(2+).

The protein belongs to the bacterial ribosomal protein bL31 family. Type A subfamily. As to quaternary structure, part of the 50S ribosomal subunit. Zn(2+) is required as a cofactor.

Its function is as follows. Binds the 23S rRNA. This is Large ribosomal subunit protein bL31 from Ruminiclostridium cellulolyticum (strain ATCC 35319 / DSM 5812 / JCM 6584 / H10) (Clostridium cellulolyticum).